The sequence spans 189 residues: Cyclin-dependent kinase inhibitor 5 (189 aa).

The span at Lys73–Ala93 shows a compositional bias: polar residues. Positions Lys73–Thr107 are disordered.

This sequence belongs to the CDI family. ICK/KRP subfamily. In terms of assembly, interacts with CYCD4-1. Does not interact with CDKA-1. As to expression, expressed in flowers and at lower levels in roots and leaves.

It is found in the nucleus. The protein resides in the nucleoplasm. Functionally, inhibits CYCD2-1/CDKA-1 complex kinase activity without interaction with the complex. This Arabidopsis thaliana (Mouse-ear cress) protein is Cyclin-dependent kinase inhibitor 5 (KRP5).